Reading from the N-terminus, the 804-residue chain is Phosphatidylinositol 4-kinase beta (804 aa).

A PIK helical domain is found at 55-245; sequence LEKVKMIHGS…GTKLRKLILS (191 aa). Disordered regions lie at residues 69–122 and 251–309; these read LDKV…ARRR and AHKK…EPVR. 2 stretches are compositionally biased toward polar residues: residues 91–103 and 281–300; these read KLTN…TSSR and DATV…SNPK. The region spanning 523–789 is the PI3K/PI4K catalytic domain; it reads EPWEEKVRRI…MVDGSMRSIT (267 aa). The segment at 529 to 535 is G-loop; that stretch reads VRRIREG. The tract at residues 656–664 is catalytic loop; sequence QVKDRHNGN. The tract at residues 675 to 699 is activation loop; that stretch reads HIDFGFILSSSPRNLGFETSAFKLT.

Belongs to the PI3/PI4-kinase family. Type III PI4K subfamily. The cofactor is Mg(2+). Mn(2+) serves as cofactor.

Its subcellular location is the endomembrane system. It is found in the mitochondrion outer membrane. The protein resides in the rough endoplasmic reticulum membrane. The catalysed reaction is a 1,2-diacyl-sn-glycero-3-phospho-(1D-myo-inositol) + ATP = a 1,2-diacyl-sn-glycero-3-phospho-(1D-myo-inositol 4-phosphate) + ADP + H(+). Functionally, phosphorylates phosphatidylinositol (PI) in the first committed step in the production of the second messenger inositol-1,4,5,-trisphosphate (PIP). May play an important role in the inner ear development. The polypeptide is Phosphatidylinositol 4-kinase beta (pi4kb) (Xenopus laevis (African clawed frog)).